The chain runs to 325 residues: ATP phosphoribosyltransferase (325 aa).

The protein belongs to the ATP phosphoribosyltransferase family. Long subfamily. It depends on Mg(2+) as a cofactor.

It is found in the cytoplasm. It carries out the reaction 1-(5-phospho-beta-D-ribosyl)-ATP + diphosphate = 5-phospho-alpha-D-ribose 1-diphosphate + ATP. Its pathway is amino-acid biosynthesis; L-histidine biosynthesis; L-histidine from 5-phospho-alpha-D-ribose 1-diphosphate: step 1/9. Feedback inhibited by histidine. Functionally, catalyzes the condensation of ATP and 5-phosphoribose 1-diphosphate to form N'-(5'-phosphoribosyl)-ATP (PR-ATP). Has a crucial role in the pathway because the rate of histidine biosynthesis seems to be controlled primarily by regulation of HisG enzymatic activity. In Rhodopseudomonas palustris (strain BisA53), this protein is ATP phosphoribosyltransferase.